The sequence spans 167 residues: NADH-quinone oxidoreductase subunit B (167 aa).

Residues Cys40, Cys41, Cys105, and Cys135 each contribute to the [4Fe-4S] cluster site.

The protein belongs to the complex I 20 kDa subunit family. In terms of assembly, NDH-1 is composed of 14 different subunits. Subunits NuoB, C, D, E, F, and G constitute the peripheral sector of the complex. It depends on [4Fe-4S] cluster as a cofactor.

Its subcellular location is the cell inner membrane. The enzyme catalyses a quinone + NADH + 5 H(+)(in) = a quinol + NAD(+) + 4 H(+)(out). In terms of biological role, NDH-1 shuttles electrons from NADH, via FMN and iron-sulfur (Fe-S) centers, to quinones in the respiratory chain. The immediate electron acceptor for the enzyme in this species is believed to be ubiquinone. Couples the redox reaction to proton translocation (for every two electrons transferred, four hydrogen ions are translocated across the cytoplasmic membrane), and thus conserves the redox energy in a proton gradient. The polypeptide is NADH-quinone oxidoreductase subunit B (Magnetococcus marinus (strain ATCC BAA-1437 / JCM 17883 / MC-1)).